We begin with the raw amino-acid sequence, 61 residues long: Small ribosomal subunit protein uS14 (61 aa).

Residues Cys-24, Cys-27, Cys-40, and Cys-43 each coordinate Zn(2+).

This sequence belongs to the universal ribosomal protein uS14 family. Zinc-binding uS14 subfamily. Part of the 30S ribosomal subunit. Contacts proteins S3 and S10. Requires Zn(2+) as cofactor.

Binds 16S rRNA, required for the assembly of 30S particles and may also be responsible for determining the conformation of the 16S rRNA at the A site. The sequence is that of Small ribosomal subunit protein uS14 from Roseiflexus castenholzii (strain DSM 13941 / HLO8).